A 187-amino-acid polypeptide reads, in one-letter code: UPF0200 protein MM_1313 (187 aa).

9–16 (GMPASGKS) lines the ATP pocket.

Belongs to the UPF0200 family.

This chain is UPF0200 protein MM_1313, found in Methanosarcina mazei (strain ATCC BAA-159 / DSM 3647 / Goe1 / Go1 / JCM 11833 / OCM 88) (Methanosarcina frisia).